Here is a 401-residue protein sequence, read N- to C-terminus: Argininosuccinate synthase (401 aa).

ATP is bound at residue 9–17; it reads AYSGGLDTS. Position 86 (Y86) interacts with L-citrulline. G116 serves as a coordination point for ATP. 3 residues coordinate L-aspartate: T118, N122, and D123. Residue N122 coordinates L-citrulline. L-citrulline contacts are provided by R126, S174, S183, E259, and Y271.

Belongs to the argininosuccinate synthase family. Type 1 subfamily. Homotetramer.

Its subcellular location is the cytoplasm. The enzyme catalyses L-citrulline + L-aspartate + ATP = 2-(N(omega)-L-arginino)succinate + AMP + diphosphate + H(+). It participates in amino-acid biosynthesis; L-arginine biosynthesis; L-arginine from L-ornithine and carbamoyl phosphate: step 2/3. In Bacillus thuringiensis subsp. konkukian (strain 97-27), this protein is Argininosuccinate synthase.